The chain runs to 395 residues: D-alanine--D-alanine ligase (395 aa).

One can recognise an ATP-grasp domain in the interval 172 to 391 (KVVLDAAGIP…YTELITRLIE (220 aa)). 204 to 266 (DAGLTYPLFV…EQGIDGREIE (63 aa)) contacts ATP. Mg(2+) contacts are provided by aspartate 345, glutamate 358, and asparagine 360.

Belongs to the D-alanine--D-alanine ligase family. Mg(2+) is required as a cofactor. The cofactor is Mn(2+).

Its subcellular location is the cytoplasm. It carries out the reaction 2 D-alanine + ATP = D-alanyl-D-alanine + ADP + phosphate + H(+). It participates in cell wall biogenesis; peptidoglycan biosynthesis. Functionally, cell wall formation. The sequence is that of D-alanine--D-alanine ligase from Bifidobacterium longum (strain DJO10A).